The chain runs to 385 residues: Deoxyhypusine synthase (385 aa).

Residues Ser108–Ser112, Thr134–Gly136, Glu140, and Asp257 each bind NAD(+). Glu139–Glu140 serves as a coordination point for spermidine. Asp262 is a spermidine binding site. Residue Gly304 coordinates NAD(+). His309 contributes to the spermidine binding site. NAD(+) is bound at residue Thr329 to Gly330. Spermidine contacts are provided by residues Gly335–Asp337 and Glu344–Lys350. The active-site Nucleophile is the Lys350. Asp363 to Val364 serves as a coordination point for NAD(+).

Belongs to the deoxyhypusine synthase family. The cofactor is NAD(+).

The catalysed reaction is [eIF5A protein]-L-lysine + spermidine = [eIF5A protein]-deoxyhypusine + propane-1,3-diamine. It functions in the pathway protein modification; eIF5A hypusination. Catalyzes the NAD-dependent oxidative cleavage of spermidine and the subsequent transfer of the butylamine moiety of spermidine to the epsilon-amino group of a specific lysine residue of the eIF-5A precursor protein to form the intermediate deoxyhypusine residue. The protein is Deoxyhypusine synthase (DYS1) of Candida glabrata (strain ATCC 2001 / BCRC 20586 / JCM 3761 / NBRC 0622 / NRRL Y-65 / CBS 138) (Yeast).